The primary structure comprises 275 residues: Pyridoxal phosphate homeostasis protein (275 aa).

Position 6 is a phosphoserine (Ser6). The residue at position 47 (Lys47) is an N6-(pyridoxal phosphate)lysine. Residue Tyr69 is modified to Phosphotyrosine. Position 125 is an N6-succinyllysine (Lys125). Residues Ser226 and Ser244 each carry the phosphoserine modification.

Belongs to the pyridoxal phosphate-binding protein YggS/PROSC family.

Functionally, pyridoxal 5'-phosphate (PLP)-binding protein, which may be involved in intracellular homeostatic regulation of pyridoxal 5'-phosphate (PLP), the active form of vitamin B6. This chain is Pyridoxal phosphate homeostasis protein, found in Pongo abelii (Sumatran orangutan).